A 1637-amino-acid polypeptide reads, in one-letter code: Surface protein (1637 aa).

A signal peptide spans 1 to 48; that stretch reads MNKNSKKKLDFLPNKLNKYSIRRFTVGTASILVGATLIFGVANDQAEA. Disordered regions lie at residues 49–305, 689–719, and 739–1611; these read AENN…RTQV, VQKG…GEPT, and PQGH…NGTL. Basic and acidic residues predominate over residues 56–65; that stretch reads KQDDSSDASK. The span at 69 to 83 shows a compositional bias: polar residues; sequence NVQTIEQSSANSNES. Composition is skewed to basic and acidic residues over residues 90–106, 127–180, and 188–264; these read DVTK…EKAN, EAPK…KATT, and ETSK…KVET. The segment covering 289-298 has biased composition (polar residues); that stretch reads AKSNSNAQPS. 5 G5 domains span residues 654–737, 783–865, 911–993, 1039–1121, and 1167–1250; these read QADL…TPEE, HGPK…GGEE, and HGPK…APEI. Basic and acidic residues predominate over residues 779 to 817; it reads DVTKHGPKAGEPEVTKEEIPFEKKREFNPDLKPGEEKVT. Residues 818 to 832 are compositionally biased toward low complexity; the sequence is QEGQTGEKTTTTPTT. Basic and acidic residues predominate over residues 907-945; that stretch reads DVTKHGPKAGEPEVTKEEIPFEKKREFNPDLKPGEEKVT. Residues 946–960 show a composition bias toward low complexity; sequence QEGQTGEKTTTTPTT. Residues 1035–1073 are compositionally biased toward basic and acidic residues; it reads DVTKHGPKAGEPEVTKEEIPFEKKREFNPDLKPGEEKVT. Low complexity predominate over residues 1074 to 1088; it reads QEGQTGEKTTTTPTT. Basic and acidic residues predominate over residues 1163–1189; sequence DVTKHGPKAGEPEVTKEEIPYETKRVL. Composition is skewed to acidic residues over residues 1282–1291 and 1302–1580; these read TGEIIEEPQD and SDAD…DSDS. 141 consecutive repeat copies span residues 1301–1302, 1303–1304, 1305–1306, 1307–1308, 1309–1310, 1311–1312, 1313–1314, 1315–1316, 1317–1318, 1319–1320, 1321–1322, 1323–1324, 1325–1326, 1327–1328, 1329–1330, 1331–1332, 1333–1334, 1335–1336, 1337–1338, 1339–1340, 1341–1342, 1343–1344, 1345–1346, 1347–1348, 1349–1350, 1351–1352, 1353–1354, 1355–1356, 1357–1358, 1359–1360, 1361–1362, 1363–1364, 1365–1366, 1367–1368, 1369–1370, 1371–1372, 1373–1374, 1375–1376, 1377–1378, 1379–1380, 1381–1382, 1383–1384, 1385–1386, 1387–1388, 1389–1390, 1391–1392, 1393–1394, 1395–1396, 1397–1398, 1399–1400, 1401–1402, 1403–1404, 1405–1406, 1407–1408, 1409–1410, 1411–1412, 1413–1414, 1415–1416, 1417–1418, 1419–1420, 1421–1422, 1423–1424, 1425–1426, 1427–1428, 1429–1430, 1431–1432, 1433–1434, 1435–1436, 1437–1438, 1439–1440, 1441–1442, 1443–1444, 1445–1446, 1447–1448, 1449–1450, 1451–1452, 1453–1454, 1455–1456, 1457–1458, 1459–1460, 1461–1462, 1463–1464, 1465–1466, 1467–1468, 1469–1470, 1471–1472, 1473–1474, 1475–1476, 1477–1478, 1479–1480, 1481–1482, 1483–1484, 1485–1486, 1487–1488, 1489–1490, 1491–1492, 1493–1494, 1495–1496, 1497–1498, 1499–1500, 1501–1502, 1503–1504, 1505–1506, 1507–1508, 1509–1510, 1511–1512, 1513–1514, 1515–1516, 1517–1518, 1519–1520, 1521–1522, 1523–1524, 1525–1526, 1527–1528, 1529–1530, 1531–1532, 1533–1534, 1535–1536, 1537–1538, 1539–1540, 1541–1542, 1543–1544, 1545–1546, 1547–1548, 1549–1550, 1551–1552, 1553–1554, 1555–1556, 1557–1558, 1559–1560, 1561–1562, 1563–1564, 1565–1566, 1567–1568, 1569–1570, 1571–1572, 1573–1574, 1575–1576, 1577–1578, 1579–1580, and 1581–1582. The tract at residues 1301–1582 is 141 X 2 AA tandem repeats of D-[SAG]; sequence DSDADSDSDA…DSDSDSDSDA (282 aa). Positions 1581 to 1599 are enriched in basic and acidic residues; sequence DADRDHNDKTDKPNNKELP. Positions 1598-1602 match the LPXTG sorting signal motif; the sequence is LPDTG. Pentaglycyl murein peptidoglycan amidated threonine is present on T1601. Residues 1602-1637 constitute a propeptide, removed by sortase; that stretch reads GNDAQNNGTLFGSLFAALGGLFLVGRRRKNKNNEEK.

Its subcellular location is the secreted. It localises to the cell wall. Its function is as follows. Could have a role in preventing adhesion at some stages during an infection. This is Surface protein (pls) from Staphylococcus aureus.